The following is a 680-amino-acid chain: Heterokaryon incompatibility protein 6, OR allele (680 aa).

Involved in the non-self-recognition during asexual growth of N.crassa. This process involves restriction of heterokaryon formation via genetic differences at 11 het loci, including mating type. The sequence is that of Heterokaryon incompatibility protein 6, OR allele (het-6) from Neurospora crassa (strain ATCC 24698 / 74-OR23-1A / CBS 708.71 / DSM 1257 / FGSC 987).